We begin with the raw amino-acid sequence, 160 residues long: Ribosomal RNA large subunit methyltransferase H (160 aa).

S-adenosyl-L-methionine contacts are provided by Leu76 and Gly108.

Belongs to the RNA methyltransferase RlmH family. As to quaternary structure, homodimer.

The protein localises to the cytoplasm. It carries out the reaction pseudouridine(1915) in 23S rRNA + S-adenosyl-L-methionine = N(3)-methylpseudouridine(1915) in 23S rRNA + S-adenosyl-L-homocysteine + H(+). Functionally, specifically methylates the pseudouridine at position 1915 (m3Psi1915) in 23S rRNA. This is Ribosomal RNA large subunit methyltransferase H from Bradyrhizobium sp. (strain BTAi1 / ATCC BAA-1182).